A 937-amino-acid chain; its full sequence is MTDSKYFTTNKKGEIFELKAELNNEKKEKRKEAVKKVIAAMTVGKDVSSLFPDVVNCMQTDNLELKKLVYLYLMNYAKSQPDMAIMAVNSFVKDCEDPNPLIRALAVRTMGCIRVDKITEYLCEPLRKCLKDEDPYVRKTAAVCVAKLHDINAQMVEDQGFLDSLRDLIADSNPMVVANAVAALSEISESHPNSNLLDLNPQNINKLLTALNECTEWGQIFILDCLSNYNPKDDREAQSICERVTPRLSHANSAVVLSAVKVLMKFLELLPKDSDYYNMLLKKLAPPLVTLLSGEPEVQYVALRNINLIVQKRPEILKQEIKVFFVKYNDPIYVKLEKLDIMIRLASQANIAQVLAELKEYATEVDVDFVRKAVRAIGRCAIKVEQSAERCVSTLLDLIQTKVNYVVQEAIVVIRDIFRKYPNKYESIIATLCENLDSLDEPDARAAMIWIVGEYAERIDNADELLESFLEGFHDESTQVQLTLLTAIVKLFLKKPSETQELVQQVLSLATQDSDNPDLRDRGYIYWRLLSTDPVTAKEVVLSEKPLISEETDLIEPTLLDELICHIGSLASVYHKPPNAFVEGSHGIHRKHLPIHHGSTDAGDSPVGTTTTTNLEQPQVIPSQGDLLGDLLNLDLGPPVNVPQVSSMQMGAVDLLGGGLDSLVGQSFIPSSVPATFAPSPTPAVVSSGLNDLFELSTGIGMAPGGYVAPKAVWLPAVKAKGLEISGTFTHRQGHIYMEMNFTNKALQHMTDFAIQFNKNSFGVIPSTPLAIHTPLMPNQSIDVSLPLNTLGPVMKMEPLNNLQVAVKNNIDVFYFSCLIPLNVLFVEDGKMERQVFLATWKDIPNENELQFQIKECHLNADTVSSKLQNNNVYTIAKRNVEGQDMLYQSLKLTNGIWILAELRIQPGNPNYTLSLKCRAPEVSQYIYQVYDSILKN.

T2 carries the post-translational modification N-acetylthreonine. S4 bears the Phosphoserine mark. An N6-acetyllysine modification is found at K265. Residues 593–617 (LPIHHGSTDAGDSPVGTTTTTNLEQ) form a disordered region. The segment covering 607-617 (VGTTTTTNLEQ) has biased composition (polar residues). Residues Y737 and Y928 each carry the phosphotyrosine modification.

It belongs to the adaptor complexes large subunit family. In terms of assembly, adaptor protein complex 2 (AP-2) is a heterotetramer composed of two large adaptins (alpha-type subunit AP2A1 or AP2A2 and beta-type subunit AP2B1), a medium adaptin (mu-type subunit AP2M1) and a small adaptin (sigma-type subunit AP2S1). Interacts with EPN1. Interacts with EPS15; clathrin competes with EPS15. Interacts with SNAP91; clathrin competes with SNAP91. Interacts with CLTC; clathrin competes with EPS15, SNAP91 and PIP5K1C. Interacts with LDLRAP1. Interacts with AMPH and BIN1. Interacts with ARF6 (GDP-bound). Interacts (dephosphorylated at Tyr-737) with ARRB1; phosphorylation of AP2B1 at Tyr-737 disrupts the interaction. Interacts with SLC2A8. Interacts with SCYL1 and SCYL2. Interacts with TGFBR1 and TGFBR2. Interacts with PIP5K1C; clathrin competes with PIP5K1C. Interacts with DENND1B. Interacts with FCHO1. Interacts with RFTN1. Interacts with KIAA1107. Together with AP2A1 or AP2A2 and AP2M1, it interacts with ADAM10; this interaction facilitates ADAM10 endocytosis from the plasma membrane during long-term potentiation in hippocampal neurons. As to expression, expressed in the brain (at protein level).

It localises to the cell membrane. The protein resides in the membrane. It is found in the coated pit. Its function is as follows. Component of the adaptor protein complex 2 (AP-2). Adaptor protein complexes function in protein transport via transport vesicles in different membrane traffic pathways. Adaptor protein complexes are vesicle coat components and appear to be involved in cargo selection and vesicle formation. AP-2 is involved in clathrin-dependent endocytosis in which cargo proteins are incorporated into vesicles surrounded by clathrin (clathrin-coated vesicles, CCVs) which are destined for fusion with the early endosome. The clathrin lattice serves as a mechanical scaffold but is itself unable to bind directly to membrane components. Clathrin-associated adaptor protein (AP) complexes which can bind directly to both the clathrin lattice and to the lipid and protein components of membranes are considered to be the major clathrin adaptors contributing the CCV formation. AP-2 also serves as a cargo receptor to selectively sort the membrane proteins involved in receptor-mediated endocytosis. AP-2 seems to play a role in the recycling of synaptic vesicle membranes from the presynaptic surface. AP-2 recognizes Y-X-X-[FILMV] (Y-X-X-Phi) and [ED]-X-X-X-L-[LI] endocytosis signal motifs within the cytosolic tails of transmembrane cargo molecules. AP-2 may also play a role in maintaining normal post-endocytic trafficking through the ARF6-regulated, non-clathrin pathway. During long-term potentiation in hippocampal neurons, AP-2 is responsible for the endocytosis of ADAM10. The AP-2 beta subunit acts via its C-terminal appendage domain as a scaffolding platform for endocytic accessory proteins; at least some clathrin-associated sorting proteins (CLASPs) are recognized by their [DE]-X(1,2)-F-X-X-[FL]-X-X-X-R motif. The AP-2 beta subunit binds to clathrin heavy chain, promoting clathrin lattice assembly; clathrin displaces at least some CLASPs from AP2B1 which probably then can be positioned for further coat assembly. This chain is AP-2 complex subunit beta (Ap2b1), found in Mus musculus (Mouse).